A 226-amino-acid chain; its full sequence is Ras-related protein Rab11A (226 aa).

Residues 24–32, 43–49, 72–76, 130–133, and 160–162 contribute to the GTP site; these read GDSAVGKSQ, SLDSKST, DTAGQ, NKCD, and SAL. Positions 46–54 match the Effector region motif; that stretch reads SKSTIGVEF. 2 S-geranylgeranyl cysteine lipidation sites follow: C222 and C223. C223 is subject to Cysteine methyl ester. A propeptide spans 224 to 226 (removed in mature form); sequence QAS.

It belongs to the small GTPase superfamily. Rab family.

It localises to the cell membrane. This chain is Ras-related protein Rab11A (RAB11A), found in Lotus japonicus (Lotus corniculatus var. japonicus).